The following is a 695-amino-acid chain: Probable Rho-GTPase-activating protein 7 (695 aa).

Residues 1-11 (MLSAPSSSTTP) are compositionally biased toward low complexity. Residues 1-26 (MLSAPSSSTTPASPPTSPPNTTSSDD) form a disordered region. The 275-residue stretch at 33–307 (PKVEAILNSE…ALDNINANTD (275 aa)) folds into the F-BAR domain. Residues 320-499 (EDNKNPTDAS…SVSPQPSSPT (180 aa)) are disordered. Composition is skewed to polar residues over residues 336-348 (PPSSYGTGSSAGK) and 366-382 (PLQNTNPAPSTFPNPSV). Composition is skewed to low complexity over residues 383–432 (ASPA…RTSS), 458–467 (PIQTTTIQTS), and 488–499 (PTSVSPQPSSPT). A phosphoserine mark is found at S496 and S497. A Rho-GAP domain is found at 506-692 (ARLDAIILRE…ILIDYCFTIF (187 aa)).

The protein is Probable Rho-GTPase-activating protein 7 (rga7) of Schizosaccharomyces pombe (strain 972 / ATCC 24843) (Fission yeast).